Reading from the N-terminus, the 425-residue chain is Formyl-CoA:oxalate CoA-transferase (425 aa).

CoA contacts are provided by residues 17–18 (QS), Arg38, 72–75 (LDTK), 96–98 (NFG), Arg104, and 136–139 (KVYE). Catalysis depends on Asp168, which acts as the Nucleophile. 247–249 (GGQ) is a binding site for substrate.

It belongs to the CoA-transferase III family. Frc subfamily. As to quaternary structure, homodimer.

The enzyme catalyses formyl-CoA + oxalate = oxalyl-CoA + formate. The protein operates within metabolic intermediate degradation; oxalate degradation; CO(2) and formate from oxalate: step 1/2. Its function is as follows. Involved in the catabolism of oxalate and in the adapatation to low pH via the induction of the oxalate-dependent acid tolerance response (ATR). Catalyzes the transfer of the CoA moiety from formyl-CoA to oxalate. In Rhodopseudomonas palustris (strain TIE-1), this protein is Formyl-CoA:oxalate CoA-transferase.